A 639-amino-acid polypeptide reads, in one-letter code: C-type lectin domain-containing protein 160 (639 aa).

A signal peptide spans 1-19; it reads MDLKSWILLSCTLLPLSVT. 2 consecutive VWFA domains span residues 31-178 and 289-474; these read DIII…VGIG and DIIF…LCQV. One can recognise a C-type lectin domain in the interval 491 to 618; the sequence is KYGECFFPTK…WNSVSCTSEY (128 aa). An intrachain disulfide couples Cys594 to Cys614.

The protein localises to the secreted. This is C-type lectin domain-containing protein 160 (clec-160) from Caenorhabditis elegans.